A 447-amino-acid polypeptide reads, in one-letter code: GTPase Der (447 aa).

2 EngA-type G domains span residues 3 to 167 and 181 to 354; these read PVIA…VQER and VKIA…AAAM. Residues 9–16, 56–60, 119–122, 187–194, 234–238, and 299–302 each bind GTP; these read GRPNVGKS, DTGGF, NKAE, DTAGL, and NKWD. The region spanning 355-439 is the KH-like domain; it reads IKLPTPQITR…PLRIEFRTNK (85 aa).

The protein belongs to the TRAFAC class TrmE-Era-EngA-EngB-Septin-like GTPase superfamily. EngA (Der) GTPase family. As to quaternary structure, associates with the 50S ribosomal subunit.

Functionally, GTPase that plays an essential role in the late steps of ribosome biogenesis. This is GTPase Der from Cupriavidus metallidurans (strain ATCC 43123 / DSM 2839 / NBRC 102507 / CH34) (Ralstonia metallidurans).